The chain runs to 1398 residues: Disease resistance protein RPV1 (1398 aa).

Positions 22–185 (TTYDVFLSFR…EITNSIFRQL (164 aa)) constitute a TIR domain. NAD(+) is bound by residues 31–36 (RGEDTR) and G63. The active site involves E97. The 240-residue stretch at 201–440 (SHVKEMILRL…KRSYDGLDRI (240 aa)) folds into the NB-ARC domain. 24 LRR repeats span residues 203–225 (VKEM…IYGV), 423–447 (KADI…IFLD), 478–504 (LNDL…GWEI), 535–560 (IKSV…VFAK), 610–632 (SYEL…NFDG), 633–657 (GKLV…DLER), 678–702 (MPNL…VGNM), 703–726 (KKLT…IGDL), 728–750 (SLES…GGNM), 751–773 (KSLT…IGDL), 775–797 (SLES…GGNM), 798–820 (KSLT…IGDL), 822–844 (SLEI…GGNM), 845–867 (KSLK…IGDL), 869–891 (SLKY…GGNM), 892–914 (KRLL…IGDL), 916–938 (SLKY…GGNM), 939–961 (KSLT…IGDL), 963–985 (SLEI…GGNM), 986–1008 (KSLK…IGDL), 1010–1032 (SLKY…GGNM), 1033–1055 (KSLL…IGDL), 1079–1102 (MKSL…IGDL), and 1105–1128 (LEML…AIDA). Over residues 1315 to 1328 (QNSGDNGSALQDAN) the composition is skewed to polar residues. Positions 1315–1336 (QNSGDNGSALQDANGNVHGANQ) are disordered. One copy of the LRR 25 repeat lies at 1346–1369 (LDLLRNLSLGDNGSVVLEDTLGNR). Positions 1369-1373 (RKRRR) match the Nuclear localization signal motif.

The protein belongs to the disease resistance TIR-NB-LRR family. Homodimer; homodimerization is required for NAD(+) hydrolase (NADase) activity.

It is found in the nucleus. It localises to the cytoplasm. The catalysed reaction is NAD(+) + H2O = ADP-D-ribose + nicotinamide + H(+). Disease resistance (R) protein that confers resistance to multiple powdery and downy mildew by promoting cell death. Acts as a NAD(+) hydrolase (NADase): in response to activation, catalyzes cleavage of NAD(+) into ADP-D-ribose (ADPR) and nicotinamide; NAD(+) cleavage triggering a defense system that promotes cell death. The polypeptide is Disease resistance protein RPV1 (Vitis rotundifolia (Muscadine grape)).